A 31-amino-acid chain; its full sequence is Cytochrome b6-f complex subunit 6 (31 aa).

The chain crosses the membrane as a helical span at residues 4-24 (LLSYFGFLFAILTLTSVLFIG).

This sequence belongs to the PetL family. The 4 large subunits of the cytochrome b6-f complex are cytochrome b6, subunit IV (17 kDa polypeptide, PetD), cytochrome f and the Rieske protein, while the 4 small subunits are PetG, PetL, PetM and PetN. The complex functions as a dimer.

Its subcellular location is the plastid. It is found in the chloroplast thylakoid membrane. In terms of biological role, component of the cytochrome b6-f complex, which mediates electron transfer between photosystem II (PSII) and photosystem I (PSI), cyclic electron flow around PSI, and state transitions. PetL is important for photoautotrophic growth as well as for electron transfer efficiency and stability of the cytochrome b6-f complex. The polypeptide is Cytochrome b6-f complex subunit 6 (Angiopteris evecta (Mule's foot fern)).